Consider the following 884-residue polypeptide: Blastomere cadherin (884 aa).

The N-terminal stretch at 1–26 is a signal peptide; that stretch reads MGGTDKFRYPSVWLCGLLCLLQVVPS. Residues 27–157 constitute a propeptide that is removed on maturation; it reads INVDVSGCQP…KHTGLKRKKR (131 aa). 5 Cadherin domains span residues 158-265, 266-378, 379-489, 490-595, and 596-706; these read DWVI…RPKF, TQPV…APIF, DPKT…APVF, VPVV…DNGP, and VPSP…GFDL. Residues 158–706 are Extracellular-facing; it reads DWVIPPIKVS…QEKLVAGFDL (549 aa). 3 N-linked (GlcNAc...) asparagine glycosylation sites follow: Asn427, Asn560, and Asn683. A helical transmembrane segment spans residues 707–730; it reads PIILVILGSILALLILSLLLLLFL. At 731-884 the chain is on the cytoplasmic side; sequence KRKKVVKEPL…YGGDDDDDEE (154 aa).

In terms of tissue distribution, expressed in pituitary gland, lung and kidney.

The protein localises to the cell membrane. Cadherins are calcium-dependent cell adhesion proteins. They preferentially interact with themselves in a homophilic manner in connecting cells; cadherins may thus contribute to the sorting of heterogeneous cell types. The polypeptide is Blastomere cadherin (Xenopus laevis (African clawed frog)).